The primary structure comprises 533 residues: Yeast-form wall Protein 1 (533 aa).

The first 21 residues, 1-21 (MKVSTIFAAASALFAATTTLA), serve as a signal peptide directing secretion. N-linked (GlcNAc...) asparagine glycosylation is present at N115. Disordered regions lie at residues 161-219 (YVPG…GEST) and 418-451 (PTKG…AHAS). Low complexity-rich tracts occupy residues 163–214 (PGSS…ATGA) and 427–451 (PGSP…AHAS). The GPI-anchor amidated glycine moiety is linked to residue G511. A propeptide spans 512-533 (AAAASAGASVLALALIPLAYFI) (removed in mature form).

This sequence belongs to the flocculin family. Post-translationally, the GPI-anchor is attached to the protein in the endoplasmic reticulum and serves to target the protein to the cell surface. There, the glucosamine-inositol phospholipid moiety is cleaved off and the GPI-modified mannoprotein is covalently attached via its lipidless GPI glycan remnant to the 1,6-beta-glucan of the outer cell wall layer. Cleaved by SAP9 and SAP10, which leads to its release from the cell wall. In terms of processing, N-glycosylated.

It localises to the secreted. Its subcellular location is the cell wall. The protein resides in the membrane. Its function is as follows. Cell wall protein which plays an anti-adhesive role and promotes dispersal of yeast forms, which allows the organism to seek new sites for colonization. In Candida albicans (strain SC5314 / ATCC MYA-2876) (Yeast), this protein is Yeast-form wall Protein 1 (YWP1).